A 245-amino-acid polypeptide reads, in one-letter code: Cypemycin N-terminal methyltransferase (245 aa).

Belongs to the methyltransferase superfamily.

The catalysed reaction is N-terminal L-alanyl-[cypemycin] + 2 S-adenosyl-L-methionine = N-terminal N,N-dimethyl-L-alanyl-[cypemycin] + 2 S-adenosyl-L-homocysteine + 3 H(+). Functionally, involved in the biosynthesis of the lanaridin cypemycin. The enzyme can methylate a variety of oligopeptides, cyclic peptides and the epsilon-amino group of lysine. In Streptomyces sp, this protein is Cypemycin N-terminal methyltransferase.